The following is a 314-amino-acid chain: Lipoyl synthase (314 aa).

Residues Cys-60, Cys-65, Cys-71, Cys-86, Cys-90, Cys-93, and Ser-300 each coordinate [4Fe-4S] cluster. One can recognise a Radical SAM core domain in the interval 72–289 (FRKGTATFMI…RQFGLSIGFS (218 aa)).

It belongs to the radical SAM superfamily. Lipoyl synthase family. Requires [4Fe-4S] cluster as cofactor.

The protein resides in the cytoplasm. It catalyses the reaction [[Fe-S] cluster scaffold protein carrying a second [4Fe-4S](2+) cluster] + N(6)-octanoyl-L-lysyl-[protein] + 2 oxidized [2Fe-2S]-[ferredoxin] + 2 S-adenosyl-L-methionine + 4 H(+) = [[Fe-S] cluster scaffold protein] + N(6)-[(R)-dihydrolipoyl]-L-lysyl-[protein] + 4 Fe(3+) + 2 hydrogen sulfide + 2 5'-deoxyadenosine + 2 L-methionine + 2 reduced [2Fe-2S]-[ferredoxin]. Its pathway is protein modification; protein lipoylation via endogenous pathway; protein N(6)-(lipoyl)lysine from octanoyl-[acyl-carrier-protein]: step 2/2. In terms of biological role, catalyzes the radical-mediated insertion of two sulfur atoms into the C-6 and C-8 positions of the octanoyl moiety bound to the lipoyl domains of lipoate-dependent enzymes, thereby converting the octanoylated domains into lipoylated derivatives. This chain is Lipoyl synthase, found in Pelobacter propionicus (strain DSM 2379 / NBRC 103807 / OttBd1).